Here is a 101-residue protein sequence, read N- to C-terminus: Small ribosomal subunit protein uS10 (101 aa).

It belongs to the universal ribosomal protein uS10 family. In terms of assembly, part of the 30S ribosomal subunit.

Involved in the binding of tRNA to the ribosomes. This Bacteroides fragilis (strain ATCC 25285 / DSM 2151 / CCUG 4856 / JCM 11019 / LMG 10263 / NCTC 9343 / Onslow / VPI 2553 / EN-2) protein is Small ribosomal subunit protein uS10.